Consider the following 181-residue polypeptide: Oligoribonuclease (181 aa).

The region spanning 8–171 (LIWIDLEMTG…LDIQESIAEL (164 aa)) is the Exonuclease domain. Tyrosine 129 is an active-site residue.

The protein belongs to the oligoribonuclease family.

It localises to the cytoplasm. Functionally, 3'-to-5' exoribonuclease specific for small oligoribonucleotides. This Shewanella amazonensis (strain ATCC BAA-1098 / SB2B) protein is Oligoribonuclease.